The sequence spans 333 residues: Arginase (333 aa).

At Met-1 the chain carries N-acetylmethionine. At Ser-16 the chain carries Phosphoserine. Thr-77 bears the Phosphothreonine mark. Mn(2+) contacts are provided by His-123, Asp-146, His-148, and Asp-150. Substrate is bound by residues 148–152, 159–161, and Asp-205; these read HADIN and SGN. Positions 256 and 258 each coordinate Mn(2+). Thr-270 carries the post-translational modification Phosphothreonine. The substrate site is built by Thr-270 and Glu-301.

It belongs to the arginase family. In terms of assembly, homotrimer. It depends on Mn(2+) as a cofactor.

The enzyme catalyses L-arginine + H2O = urea + L-ornithine. The protein operates within nitrogen metabolism; urea cycle; L-ornithine and urea from L-arginine: step 1/1. In Saccharomyces cerevisiae (strain ATCC 204508 / S288c) (Baker's yeast), this protein is Arginase (CAR1).